The chain runs to 416 residues: CinA-like protein (416 aa).

Belongs to the CinA family.

This chain is CinA-like protein, found in Solibacter usitatus (strain Ellin6076).